Reading from the N-terminus, the 209-residue chain is Chaperone protein TorD (209 aa).

Belongs to the TorD/DmsD family. TorD subfamily.

The protein localises to the cytoplasm. Functionally, involved in the biogenesis of TorA. Acts on TorA before the insertion of the molybdenum cofactor and, as a result, probably favors a conformation of the apoenzyme that is competent for acquiring the cofactor. This Shewanella sp. (strain ANA-3) protein is Chaperone protein TorD.